The chain runs to 31 residues: Chymotrypsin (31 aa).

The 31-residue stretch at 1–31 (IVGGVEAVPGVWPYQAALFIIDMYFCGGSLI) folds into the Peptidase S1 domain.

Belongs to the peptidase S1 family.

It localises to the secreted. It is found in the extracellular space. The enzyme catalyses Preferential cleavage: Tyr-|-Xaa, Trp-|-Xaa, Phe-|-Xaa, Leu-|-Xaa.. The polypeptide is Chymotrypsin (Penaeus monodon (Giant tiger prawn)).